Consider the following 353-residue polypeptide: Inositol-tetrakisphosphate 1-kinase 3 (353 aa).

The segment at 1 to 25 is disordered; sequence MKLTDNEEITMNGTREMETTEQETS. 1D-myo-inositol 1,3,4-trisphosphate-binding residues include Lys-50 and Lys-92. Residues Arg-127 and Lys-177 each contribute to the ATP site. The ATP-grasp domain maps to 138-350; that stretch reads NLSDSNGRVG…QSQCKKRALA (213 aa). Residues His-188 and Lys-220 each contribute to the 1D-myo-inositol 1,3,4-trisphosphate site. ATP-binding positions include 209-220 and Ser-235; that span reads QEFVNHGGVLFK. The Mg(2+) site is built by Asp-300, Asp-315, and Asn-317. Asn-317 lines the 1D-myo-inositol 1,3,4-trisphosphate pocket.

This sequence belongs to the ITPK1 family. As to quaternary structure, monomer. Mg(2+) is required as a cofactor. Highly expressed in leaves and flowers, and at lower levels in roots, stems, cauline leaves and siliques.

The enzyme catalyses 1D-myo-inositol 3,4,5,6-tetrakisphosphate + ATP = 1D-myo-inositol 1,3,4,5,6-pentakisphosphate + ADP + H(+). It carries out the reaction 1D-myo-inositol 1,3,4-trisphosphate + ATP = 1D-myo-inositol 1,3,4,5-tetrakisphosphate + ADP + H(+). The catalysed reaction is 1D-myo-inositol 1,3,4-trisphosphate + ATP = 1D-myo-inositol 1,3,4,6-tetrakisphosphate + ADP + H(+). Kinase that can phosphorylate various inositol polyphosphate such as Ins(3,4,5,6)P4 or Ins(1,3,4)P3. Phosphorylates Ins(3,4,5,6)P4 to form InsP5. This reaction is thought to have regulatory importance, since Ins(3,4,5,6)P4 is an inhibitor of plasma membrane Ca(2+)-activated Cl(-) channels, while Ins(1,3,4,5,6)P5 is not. Also phosphorylates Ins(1,3,4)P3 or a racemic mixture of Ins(1,4,6)P3 and Ins(3,4,6)P3 to form InsP4. Ins(1,3,4,6)P4 is an essential molecule in the hexakisphosphate (InsP6) pathway. This Arabidopsis thaliana (Mouse-ear cress) protein is Inositol-tetrakisphosphate 1-kinase 3 (ITPK3).